Here is a 294-residue protein sequence, read N- to C-terminus: GDP-6-deoxy-D-talose 4-dehydrogenase (294 aa).

Residues 11-12, 38-39, 60-64, Thr-104, Tyr-128, Lys-132, and Phe-154 contribute to the NAD(+) site; these read FI, DL, and LAALT. The substrate site is built by Thr-104 and Tyr-128. Tyr-128 (proton acceptor) is an active-site residue. The substrate site is built by Asn-155 and Arg-190.

It belongs to the NAD(P)-dependent epimerase/dehydratase family.

The catalysed reaction is GDP-6-deoxy-alpha-D-talose + NAD(+) = GDP-4-dehydro-alpha-D-rhamnose + NADH + H(+). It catalyses the reaction GDP-6-deoxy-alpha-D-talose + NADP(+) = GDP-4-dehydro-alpha-D-rhamnose + NADPH + H(+). It functions in the pathway bacterial outer membrane biogenesis; LPS O-antigen biosynthesis. Functionally, catalyzes the conversion of GDP-4-dehydro-6-deoxy-D-mannose to GDP-6-deoxy-D-talose. The sequence is that of GDP-6-deoxy-D-talose 4-dehydrogenase (tld) from Aggregatibacter actinomycetemcomitans (Actinobacillus actinomycetemcomitans).